Reading from the N-terminus, the 429-residue chain is Trigger factor (429 aa).

The region spanning 161-246 is the PPIase FKBP-type domain; sequence GDRLSIDFKG…INEVALPKEP (86 aa).

It belongs to the FKBP-type PPIase family. Tig subfamily.

Its subcellular location is the cytoplasm. It catalyses the reaction [protein]-peptidylproline (omega=180) = [protein]-peptidylproline (omega=0). Involved in protein export. Acts as a chaperone by maintaining the newly synthesized protein in an open conformation. Functions as a peptidyl-prolyl cis-trans isomerase. This is Trigger factor from Ruthia magnifica subsp. Calyptogena magnifica.